The primary structure comprises 289 residues: LysM and putative peptidoglycan-binding domain-containing protein 4 (289 aa).

Residues 1–23 (MRLREGPTHSFQPPSSVHSSLGS) are disordered. The Extracellular portion of the chain corresponds to 1-208 (MRLREGPTHS…PASGADWGIR (208 aa)). The span at 9–23 (HSFQPPSSVHSSLGS) shows a compositional bias: polar residues. Residues N30 and N59 are each glycosylated (N-linked (GlcNAc...) asparagine). Positions 71-115 (LERAITEDDNLNKLALQYGCKVSDIKRVNNLITDQDIYALKTIKI) constitute a LysM domain. Residues N134 and N178 are each glycosylated (N-linked (GlcNAc...) asparagine). The chain crosses the membrane as a helical span at residues 209–229 (WWNAVFIMLLVGIVLPVFYIV). Residues 230 to 289 (YFKTQGDSEGTFSIEGRTNVSTSLSPHTNTGHSMEQMTQRTSGFSPGLLQDTHKLLNPGG) are Cytoplasmic-facing. The tract at residues 252 to 272 (SLSPHTNTGHSMEQMTQRTSG) is disordered.

The protein localises to the membrane. The chain is LysM and putative peptidoglycan-binding domain-containing protein 4 (lysmd4) from Xenopus laevis (African clawed frog).